Here is a 1729-residue protein sequence, read N- to C-terminus: 182 kDa tankyrase-1-binding protein (1729 aa).

Residues 1 to 12 (MKVSTLRESSAM) show a composition bias toward polar residues. The interval 1–151 (MKVSTLRESS…VRKAPAPFRP (151 aa)) is disordered. Ser-14 bears the Phosphoserine mark. The segment covering 46 to 63 (ALPAKPALPAKPSLLVPV) has biased composition (low complexity). Over residues 117 to 127 (TGKEEAGKEEP) the composition is skewed to basic and acidic residues. Residue Thr-131 is modified to Phosphothreonine. A phosphoserine mark is found at Ser-178, Ser-221, and Ser-228. Disordered regions lie at residues 184-450 (GSRL…LAAL), 484-603 (PSGL…ESPL), and 657-880 (ETTQ…SSRD). The tract at residues 210 to 1572 (DEDGSTLFRG…TEILDSAMYR (1363 aa)) is acidic. Basic and acidic residues predominate over residues 230–245 (AECREEHSKTPEERSL). Phosphothreonine is present on Thr-239. Ser-287 and Ser-301 each carry phosphoserine. Positions 352-363 (PSPGLPAEGAPE) are enriched in low complexity. The span at 364–374 (APRPSSPPPEV) shows a compositional bias: pro residues. Residues Ser-429, Ser-435, Ser-437, Ser-494, and Ser-498 each carry the phosphoserine modification. Low complexity-rich tracts occupy residues 500-512 (ITEA…AAEA), 524-541 (VSQQ…SGSS), and 572-583 (LPTTEGTPGLPL). Thr-501 is modified (phosphothreonine). 9 positions are modified to phosphoserine: Ser-601, Ser-672, Ser-691, Ser-695, Ser-712, Ser-724, Ser-744, Ser-762, and Ser-806. The span at 738–753 (PQPSSFSPSSWCQGAS) shows a compositional bias: polar residues. A compositionally biased stretch (polar residues) spans 803-812 (ASSSQDQSKV). The residue at position 833 (Thr-833) is a Phosphothreonine. Phosphoserine occurs at positions 836, 851, 872, 877, 882, and 893. The segment covering 858–872 (RDAELQDQEFGKRDS) has biased composition (basic and acidic residues). Tyr-897 carries the post-translational modification Phosphotyrosine. The segment at 897–1083 (YASQDANEQG…ADLEDGEMGK (187 aa)) is disordered. Ser-899, Ser-920, Ser-936, and Ser-976 each carry phosphoserine. Thr-979 carries the phosphothreonine modification. Phosphoserine occurs at positions 983, 987, 1004, 1008, 1013, 1024, 1029, 1054, 1073, 1091, 1103, 1133, 1138, 1158, 1178, 1248, and 1253. The segment covering 1012–1021 (GSRDAGRPGE) has biased composition (basic and acidic residues). Positions 1043–1054 (RDQSSWQNSDAS) are enriched in polar residues. Positions 1240-1302 (EVGEGGGHSQ…GAVCSPGESK (63 aa)) are disordered. Phosphothreonine is present on Thr-1282. Phosphoserine occurs at positions 1297, 1328, 1331, 1383, and 1385. The segment at 1362 to 1561 (AREHGVGGVS…SPSQDFSFIE (200 aa)) is disordered. Residues 1389–1400 (EARDPLEARELG) are compositionally biased toward basic and acidic residues. A compositionally biased stretch (polar residues) spans 1406–1419 (GPETQGEDYSSSSL). Phosphoserine occurs at positions 1435, 1439, 1450, 1452, 1473, 1476, 1503, and 1506. Residues 1450–1542 (SGSQGLLEEM…SDQGPAQTSR (93 aa)) are tankyrase-binding. Residue Thr-1518 is modified to Phosphothreonine. A phosphoserine mark is found at Ser-1533, Ser-1545, and Ser-1558. The residue at position 1563 (Thr-1563) is a Phosphothreonine. The segment at 1575–1729 (ANLGRKRGHR…QALKLKKKKV (155 aa)) is disordered. A compositionally biased stretch (basic residues) spans 1577–1586 (LGRKRGHRAP). Residues 1602–1615 (SDAHLFQDSTEPRA) show a composition bias toward basic and acidic residues. A phosphoserine mark is found at Ser-1620, Ser-1621, and Ser-1631. The Nuclear localization signal signature appears at 1629–1635 (PQSRRTR). Lys-1644 carries the post-translational modification N6-methyllysine. 3 positions are modified to phosphoserine: Ser-1652, Ser-1666, and Ser-1715. Basic and acidic residues predominate over residues 1665–1679 (RSAEEGELAESKSSQ). A Nuclear localization signal motif is present at residues 1723–1729 (KLKKKKV).

Binds to the ANK repeat domain of TNKS1 and TNKS2. Post-translationally, ADP-ribosylated by TNKS1 (in vitro). As to expression, detected in testis, ovary, lung, skeletal muscle, heart, prostate and pancreas, and at very low levels in brain and peripheral blood leukocytes.

The protein localises to the nucleus. The protein resides in the cytoplasm. Its subcellular location is the cytoskeleton. It localises to the chromosome. This chain is 182 kDa tankyrase-1-binding protein (TNKS1BP1), found in Homo sapiens (Human).